The primary structure comprises 314 residues: uncharacterized protein (314 aa).

The N-terminal 29 residues, 1–29, are a transit peptide targeting the mitochondrion; sequence MMRLIRTLPLRCFKTRIRRQGSLLCLRCF. Positions 52-74 are disordered; the sequence is SSSPLSKNKEKQEKPEKENEGKH. Positions 58 to 74 are enriched in basic and acidic residues; it reads KNKEKQEKPEKENEGKH. Positions 177 to 207 form a coiled coil; that stretch reads LNEHHLQLLKLKRELNSIHDELNEIIIDLLQ. The helical transmembrane segment at 262-279 threads the bilayer; that stretch reads GLLVILVLVCSIMIGVSA. Positions 281–314 are disordered; sequence KKERPGLQEPEEPEILAPKEDIDTTFPQDQHDID.

The protein localises to the mitochondrion membrane. This is an uncharacterized protein from Saccharomyces cerevisiae (strain ATCC 204508 / S288c) (Baker's yeast).